The sequence spans 103 residues: Acyl-CoA-binding protein (103 aa).

The ACB domain occupies 18–103 (HQADFDEAAE…AKTMVEKYGI (86 aa)). An acyl-CoA contacts are provided by residues K30, 45 to 49 (YGFYK), K67, K71, and Y90.

This sequence belongs to the ACBP family. In terms of assembly, monomer.

The protein localises to the endoplasmic reticulum. Its subcellular location is the golgi apparatus. Binds medium- and long-chain acyl-CoA esters with very high affinity and may function as an intracellular carrier of acyl-CoA esters. It is also able to displace diazepam from the benzodiazepine (BZD) recognition site located on the GABA type A receptor. It is therefore possible that this protein also acts as a neuropeptide to modulate the action of the GABA receptor. This is Acyl-CoA-binding protein (DBI) from Anas platyrhynchos (Mallard).